Reading from the N-terminus, the 317-residue chain is Type II methyltransferase M.NgoBI (317 aa).

Residues 2-302 (YKTIDLFSGI…KICSLLFPAR (301 aa)) enclose the SAM-dependent MTase C5-type domain. The active site involves Cys71.

Belongs to the class I-like SAM-binding methyltransferase superfamily. C5-methyltransferase family.

It carries out the reaction a 2'-deoxycytidine in DNA + S-adenosyl-L-methionine = a 5-methyl-2'-deoxycytidine in DNA + S-adenosyl-L-homocysteine + H(+). A methylase, recognizes the double-stranded sequence 5'-RGCGCY-3', methylates C-5 on both strands, and protects the DNA from cleavage by the NgoBI endonuclease. The polypeptide is Type II methyltransferase M.NgoBI (ngoBIM) (Neisseria gonorrhoeae).